The chain runs to 48 residues: Ribulose bisphosphate carboxylase large chain (48 aa).

It belongs to the RuBisCO large chain family. Type I subfamily. As to quaternary structure, heterohexadecamer of 8 large chains and 8 small chains.

The protein resides in the plastid. It localises to the chloroplast. The catalysed reaction is 2 (2R)-3-phosphoglycerate + 2 H(+) = D-ribulose 1,5-bisphosphate + CO2 + H2O. It catalyses the reaction D-ribulose 1,5-bisphosphate + O2 = 2-phosphoglycolate + (2R)-3-phosphoglycerate + 2 H(+). Functionally, ruBisCO catalyzes two reactions: the carboxylation of D-ribulose 1,5-bisphosphate, the primary event in carbon dioxide fixation, as well as the oxidative fragmentation of the pentose substrate in the photorespiration process. Both reactions occur simultaneously and in competition at the same active site. This is Ribulose bisphosphate carboxylase large chain (rbcL) from Pinus pinaster (Maritime pine).